The following is a 206-amino-acid chain: Dephospho-CoA kinase (206 aa).

The 197-residue stretch at 4–200 (IVALTGGIGS…AHYLQLASQF (197 aa)) folds into the DPCK domain. Residue 12-17 (GSGKST) coordinates ATP.

It belongs to the CoaE family.

The protein localises to the cytoplasm. It carries out the reaction 3'-dephospho-CoA + ATP = ADP + CoA + H(+). It participates in cofactor biosynthesis; coenzyme A biosynthesis; CoA from (R)-pantothenate: step 5/5. Its function is as follows. Catalyzes the phosphorylation of the 3'-hydroxyl group of dephosphocoenzyme A to form coenzyme A. The sequence is that of Dephospho-CoA kinase from Shigella boydii serotype 4 (strain Sb227).